Consider the following 135-residue polypeptide: Fatty acid-binding protein 5 (135 aa).

Residue Ala2 is modified to N-acetylalanine. The residue at position 17 (Lys17) is an N6-acetyllysine. Tyr22 is modified (phosphotyrosine; by Tyr-kinases). The Nuclear localization signal signature appears at 24 to 34 (KEVGVGMALRK). N-eicosanoyl ethanolamine contacts are provided by Cys43 and Arg109. An intrachain disulfide couples Cys120 to Cys127. 129–131 (RVY) contacts (9Z,12Z)-octadecadienoate. An N-eicosanoyl ethanolamine-binding site is contributed by Tyr131. Tyr131 is a hexadecanoate binding site. Residue Tyr131 is modified to Phosphotyrosine.

The protein belongs to the calycin superfamily. Fatty-acid binding protein (FABP) family. In terms of assembly, monomer. In terms of tissue distribution, most abundant in lens and retina (found in the mueller cells), moderately abundant in heart and testis (found in the Sertoli cells), and present in very low amounts in lung.

The protein localises to the cytoplasm. The protein resides in the nucleus. It localises to the synapse. Its subcellular location is the postsynaptic density. It is found in the secreted. The catalysed reaction is hexadecanoate(out) = hexadecanoate(in). The enzyme catalyses (9Z,12Z)-octadecadienoate(out) = (9Z,12Z)-octadecadienoate(in). It catalyses the reaction (9Z)-octadecenoate(out) = (9Z)-octadecenoate(in). Functionally, intracellular carrier for long-chain fatty acids and related active lipids, such as endocannabinoids, that regulate the metabolism and actions of the ligands they bind. In addition to the cytosolic transport, selectively delivers specific fatty acids from the cytosol to the nucleus, wherein they activate nuclear receptors. Delivers retinoic acid to the nuclear receptor peroxisome proliferator-activated receptor delta; which promotes proliferation and survival. May also serve as a synaptic carrier of endocannabinoid at central synapses and thus controls retrograde endocannabinoid signaling. Modulates inflammation by regulating PTGES induction via NF-kappa-B activation, and prostaglandin E2 (PGE2) biosynthesis during inflammation. The sequence is that of Fatty acid-binding protein 5 (FABP5) from Bos taurus (Bovine).